The chain runs to 121 residues: Ragulator complex protein LAMTOR4 homolog (121 aa).

The disordered stretch occupies residues 91–121; it reads TQNGATTSSSSSTSYNDAAEGNNISSSTVLA. Polar residues predominate over residues 112–121; that stretch reads NNISSSTVLA.

This sequence belongs to the LAMTOR4 family. Part of the Ragulator complex.

The protein localises to the lysosome. Its function is as follows. Regulator of the TOR pathway, a signaling cascade that promotes cell growth in response to growth factors, energy levels, and amino acids. As part of the Ragulator complex, may activate the TOR signaling cascade in response to amino acids. The polypeptide is Ragulator complex protein LAMTOR4 homolog (Drosophila pseudoobscura pseudoobscura (Fruit fly)).